A 396-amino-acid chain; its full sequence is Ribosomal RNA large subunit methyltransferase I (396 aa).

In terms of domain architecture, PUA spans 2–81 (TVRLILAKGR…ESIDIDFFVR (80 aa)).

It belongs to the methyltransferase superfamily. RlmI family.

It localises to the cytoplasm. It carries out the reaction cytidine(1962) in 23S rRNA + S-adenosyl-L-methionine = 5-methylcytidine(1962) in 23S rRNA + S-adenosyl-L-homocysteine + H(+). In terms of biological role, specifically methylates the cytosine at position 1962 (m5C1962) of 23S rRNA. This Erwinia tasmaniensis (strain DSM 17950 / CFBP 7177 / CIP 109463 / NCPPB 4357 / Et1/99) protein is Ribosomal RNA large subunit methyltransferase I.